Here is a 325-residue protein sequence, read N- to C-terminus: Aldose 1-epimerase (325 aa).

73 to 74 (NR) contributes to the substrate binding site. His-177 functions as the Proton donor in the catalytic mechanism. Asp-230 is a binding site for substrate. The Proton acceptor role is filled by Glu-283.

The protein belongs to the aldose epimerase family.

It catalyses the reaction alpha-D-glucose = beta-D-glucose. Its pathway is carbohydrate metabolism; hexose metabolism. The polypeptide is Aldose 1-epimerase (galM) (Bacillus subtilis (strain 168)).